We begin with the raw amino-acid sequence, 110 residues long: Large ribosomal subunit protein uL24 (110 aa).

This sequence belongs to the universal ribosomal protein uL24 family. Part of the 50S ribosomal subunit.

One of two assembly initiator proteins, it binds directly to the 5'-end of the 23S rRNA, where it nucleates assembly of the 50S subunit. Functionally, one of the proteins that surrounds the polypeptide exit tunnel on the outside of the subunit. This Chloroflexus aurantiacus (strain ATCC 29366 / DSM 635 / J-10-fl) protein is Large ribosomal subunit protein uL24.